Consider the following 145-residue polypeptide: Thioredoxin C-3 (145 aa).

Heme is bound by residues C25, C28, and H29. The Thioredoxin domain maps to 29 to 140 (HQALLPLEPI…LQQWLDQQLQ (112 aa)). C65 and C68 are disulfide-bonded.

This sequence belongs to the thioredoxin family.

Functionally, participates in various redox reactions through the reversible oxidation of its active center dithiol to a disulfide and catalyzes dithiol-disulfide exchange reactions. In Corynebacterium nephridii, this protein is Thioredoxin C-3.